The chain runs to 297 residues: Large ribosomal subunit protein uL15m (297 aa).

The transit peptide at 1–22 directs the protein to the mitochondrion; the sequence is MAGPVRGAAGPWALDLLRALPR. Positions 27 to 68 are disordered; sequence NLRPNPGSRKPERRRRGQRRGRKCGRGHKGERQRGTRPRLGF. Over residues 37-53 the composition is skewed to basic residues; the sequence is PERRRRGQRRGRKCGRG.

It belongs to the universal ribosomal protein uL15 family. As to quaternary structure, component of the mitochondrial ribosome large subunit (39S) which comprises a 16S rRNA and about 50 distinct proteins.

The protein resides in the mitochondrion. This chain is Large ribosomal subunit protein uL15m (MRPL15), found in Bos taurus (Bovine).